A 283-amino-acid polypeptide reads, in one-letter code: Orotidine 5'-phosphate decarboxylase (283 aa).

Residues Asp-40, 62–64 (KTH), 93–102 (DRKFADIGNT), Tyr-220, and Arg-239 each bind substrate. Lys-95 acts as the Proton donor in catalysis.

Belongs to the OMP decarboxylase family.

The enzyme catalyses orotidine 5'-phosphate + H(+) = UMP + CO2. It functions in the pathway pyrimidine metabolism; UMP biosynthesis via de novo pathway; UMP from orotate: step 2/2. This Mycosarcoma maydis (Corn smut fungus) protein is Orotidine 5'-phosphate decarboxylase (PYR6).